Reading from the N-terminus, the 570-residue chain is Sulfite reductase [NADPH] hemoprotein beta-component (570 aa).

The [4Fe-4S] cluster site is built by cysteine 434, cysteine 440, cysteine 479, and cysteine 483. Residue cysteine 483 participates in siroheme binding.

Belongs to the nitrite and sulfite reductase 4Fe-4S domain family. As to quaternary structure, alpha(8)-beta(8). The alpha component is a flavoprotein, the beta component is a hemoprotein. Requires siroheme as cofactor. It depends on [4Fe-4S] cluster as a cofactor.

It carries out the reaction hydrogen sulfide + 3 NADP(+) + 3 H2O = sulfite + 3 NADPH + 4 H(+). It functions in the pathway sulfur metabolism; hydrogen sulfide biosynthesis; hydrogen sulfide from sulfite (NADPH route): step 1/1. Component of the sulfite reductase complex that catalyzes the 6-electron reduction of sulfite to sulfide. This is one of several activities required for the biosynthesis of L-cysteine from sulfate. In Escherichia coli (strain B / BL21-DE3), this protein is Sulfite reductase [NADPH] hemoprotein beta-component.